The primary structure comprises 120 residues: MTAFRMVWSMLLASLLMLLVASSTAPADALSPPAAGLGADHSFTKRSLFDPSCTGVFDRQLLRRLSRVCDDCFNVFREPNVATECRSNCYNNEVFRQCMEYLLPAHLHEEHRLAVQMVGK.

A signal peptide spans 1 to 27; sequence MTAFRMVWSMLLASLLMLLVASSTAPA. Disulfide bonds link Cys-53–Cys-89, Cys-69–Cys-85, and Cys-72–Cys-98. The residue at position 118 (Val-118) is a Valine amide.

The protein belongs to the arthropod CHH/MIH/GIH/VIH hormone family.

Its subcellular location is the secreted. Its function is as follows. Hormone found in the sinus gland of isopods and decapods which controls the blood sugar level. Has a secretagogue action over the amylase released from the midgut gland. May act as a stress hormone and may be involved in the control of molting and reproduction. The chain is Crustacean hyperglycemic hormones 1 (CHH1) from Penaeus monodon (Giant tiger prawn).